Here is a 1070-residue protein sequence, read N- to C-terminus: DNA-directed RNA polymerase subunit beta (1070 aa).

This sequence belongs to the RNA polymerase beta chain family. As to quaternary structure, in plastids the minimal PEP RNA polymerase catalytic core is composed of four subunits: alpha, beta, beta', and beta''. When a (nuclear-encoded) sigma factor is associated with the core the holoenzyme is formed, which can initiate transcription.

The protein resides in the plastid. It localises to the chloroplast. The enzyme catalyses RNA(n) + a ribonucleoside 5'-triphosphate = RNA(n+1) + diphosphate. Functionally, DNA-dependent RNA polymerase catalyzes the transcription of DNA into RNA using the four ribonucleoside triphosphates as substrates. The chain is DNA-directed RNA polymerase subunit beta from Nandina domestica (Heavenly bamboo).